A 65-amino-acid chain; its full sequence is Conotoxin Bu19 (65 aa).

The first 21 residues, 1 to 21 (MGMRMVFTVFLLVVLATTVVS), serve as a signal peptide directing secretion. A propeptide spanning residues 22–48 (FTSDRASDGRNAAANDKASDLAALAVR) is cleaved from the precursor. 2 disulfides stabilise this stretch: cysteine 50-cysteine 56 and cysteine 51-cysteine 64. Cysteine 64 is modified (cysteine amide).

It belongs to the conotoxin A superfamily. In terms of tissue distribution, expressed by the venom duct.

The protein localises to the secreted. The sequence is that of Conotoxin Bu19 from Conus bullatus (Bubble cone).